A 138-amino-acid chain; its full sequence is Basic phospholipase A2 DAV-N6 (138 aa).

The first 16 residues, 1 to 16 (MRTLWIVAVLLVSVEG), serve as a signal peptide directing secretion. Cystine bridges form between Cys-42–Cys-131, Cys-44–Cys-60, Cys-59–Cys-111, Cys-65–Cys-138, Cys-66–Cys-104, Cys-73–Cys-97, and Cys-91–Cys-102. Positions 43, 45, and 47 each coordinate Ca(2+). His-63 is a catalytic residue. Asp-64 contributes to the Ca(2+) binding site. Asp-105 is a catalytic residue.

The cofactor is Ca(2+). In terms of tissue distribution, expressed by the venom gland.

It localises to the secreted. The catalysed reaction is a 1,2-diacyl-sn-glycero-3-phosphocholine + H2O = a 1-acyl-sn-glycero-3-phosphocholine + a fatty acid + H(+). Its function is as follows. Snake venom phospholipase A2 (PLA2) that inhibits neuromuscular transmission by blocking acetylcholine release from the nerve termini. PLA2 catalyzes the calcium-dependent hydrolysis of the 2-acyl groups in 3-sn-phosphoglycerides. This chain is Basic phospholipase A2 DAV-N6, found in Deinagkistrodon acutus (Hundred-pace snake).